The chain runs to 120 residues: Aspartate 1-decarboxylase (120 aa).

Ser25 functions as the Schiff-base intermediate with substrate; via pyruvic acid in the catalytic mechanism. A Pyruvic acid (Ser) modification is found at Ser25. Residue Thr57 participates in substrate binding. Catalysis depends on Tyr58, which acts as the Proton donor. 73–75 lines the substrate pocket; sequence GAA.

Belongs to the PanD family. Heterooctamer of four alpha and four beta subunits. It depends on pyruvate as a cofactor. In terms of processing, is synthesized initially as an inactive proenzyme, which is activated by self-cleavage at a specific serine bond to produce a beta-subunit with a hydroxyl group at its C-terminus and an alpha-subunit with a pyruvoyl group at its N-terminus.

It localises to the cytoplasm. It catalyses the reaction L-aspartate + H(+) = beta-alanine + CO2. The protein operates within cofactor biosynthesis; (R)-pantothenate biosynthesis; beta-alanine from L-aspartate: step 1/1. Catalyzes the pyruvoyl-dependent decarboxylation of aspartate to produce beta-alanine. The chain is Aspartate 1-decarboxylase from Methylibium petroleiphilum (strain ATCC BAA-1232 / LMG 22953 / PM1).